We begin with the raw amino-acid sequence, 1163 residues long: Putative beta-glucuronidase (1163 aa).

Positions 1-20 (MPRFLKYILGLFLISISAFG) are cleaved as a signal peptide.

The protein belongs to the glycosyl hydrolase 2 family.

It localises to the periplasm. It catalyses the reaction a beta-D-glucuronoside + H2O = D-glucuronate + an alcohol. Functionally, glycoside hydrolase involved in ulvan degradation. Ulvan is the main polysaccharide component of the Ulvales (green seaweed) cell wall. It is composed of disaccharide building blocks comprising 3-sulfated rhamnose (Rha3S) linked to D-glucuronic acid (GlcA), L-iduronic acid (IduA), or D-xylose (Xyl). The polypeptide is Putative beta-glucuronidase (Formosa agariphila (strain DSM 15362 / KCTC 12365 / LMG 23005 / KMM 3901 / M-2Alg 35-1)).